The following is a 533-amino-acid chain: Retinoid isomerohydrolase (533 aa).

S2 carries the post-translational modification N-acetylserine. C112 is lipidated: S-palmitoyl cysteine; in membrane form. H180 lines the Fe cation pocket. A lipid anchor (S-palmitoyl cysteine; in membrane form) is attached at C231. Residues H241 and H313 each contribute to the Fe cation site. 2 S-palmitoyl cysteine; in membrane form lipidation sites follow: C329 and C330. H527 serves as a coordination point for Fe cation.

Belongs to the carotenoid oxygenase family. Requires Fe(2+) as cofactor. Post-translationally, palmitoylation by LRAT regulates ligand binding specificity; the palmitoylated form (membrane form) specifically binds all-trans-retinyl-palmitate, while the soluble unpalmitoylated form binds all-trans-retinol (vitamin A). Retinal pigment epithelium specific.

It is found in the cell membrane. It catalyses the reaction an all-trans-retinyl ester + H2O = 11-cis-retinol + a fatty acid + H(+). It carries out the reaction lutein = (3R,3'S)-zeaxanthin. The enzyme catalyses all-trans-retinyl hexadecanoate + H2O = 11-cis-retinol + hexadecanoate + H(+). Critical isomerohydrolase in the retinoid cycle involved in regeneration of 11-cis-retinal, the chromophore of rod and cone opsins. Catalyzes the cleavage and isomerization of all-trans-retinyl fatty acid esters to 11-cis-retinol which is further oxidized by 11-cis retinol dehydrogenase to 11-cis-retinal for use as visual chromophore. Essential for the production of 11-cis retinal for both rod and cone photoreceptors. Also capable of catalyzing the isomerization of lutein to meso-zeaxanthin an eye-specific carotenoid. The soluble form binds vitamin A (all-trans-retinol), making it available for LRAT processing to all-trans-retinyl ester. The membrane form, palmitoylated by LRAT, binds all-trans-retinyl esters, making them available for IMH (isomerohydrolase) processing to all-cis-retinol. The soluble form is regenerated by transferring its palmitoyl groups onto 11-cis-retinol, a reaction catalyzed by LRAT. This chain is Retinoid isomerohydrolase (RPE65), found in Cynops pyrrhogaster (Japanese fire-bellied newt).